Reading from the N-terminus, the 227-residue chain is 3,4-dihydroxy-2-butanone 4-phosphate synthase (227 aa).

Residues 45 to 46 (RE), D50, 158 to 162 (RRGHT), and E182 each bind D-ribulose 5-phosphate. E46 serves as a coordination point for Mg(2+). Mg(2+) is bound at residue H161.

This sequence belongs to the DHBP synthase family. In terms of assembly, homodimer. Mg(2+) serves as cofactor. The cofactor is Mn(2+).

The enzyme catalyses D-ribulose 5-phosphate = (2S)-2-hydroxy-3-oxobutyl phosphate + formate + H(+). It functions in the pathway cofactor biosynthesis; riboflavin biosynthesis; 2-hydroxy-3-oxobutyl phosphate from D-ribulose 5-phosphate: step 1/1. In terms of biological role, catalyzes the conversion of D-ribulose 5-phosphate to formate and 3,4-dihydroxy-2-butanone 4-phosphate. The chain is 3,4-dihydroxy-2-butanone 4-phosphate synthase from Ralstonia nicotianae (strain ATCC BAA-1114 / GMI1000) (Ralstonia solanacearum).